We begin with the raw amino-acid sequence, 484 residues long: Ornithine decarboxylase (484 aa).

N6-(pyridoxal phosphate)lysine is present on Lys114. Residues Ser245, Gly282, and 315 to 318 (EPGR) contribute to the pyridoxal 5'-phosphate site. A substrate-binding site is contributed by 381–382 (FD). Cys422 (proton donor; shared with dimeric partner) is an active-site residue. Asp423 provides a ligand contact to substrate. Tyr452 provides a ligand contact to pyridoxal 5'-phosphate.

The protein belongs to the Orn/Lys/Arg decarboxylase class-II family. Homodimer. Only the dimer is catalytically active, as the active sites are constructed of residues from both monomers. It depends on pyridoxal 5'-phosphate as a cofactor.

It localises to the cytoplasm. The catalysed reaction is L-ornithine + H(+) = putrescine + CO2. It participates in amine and polyamine biosynthesis; putrescine biosynthesis via L-ornithine pathway; putrescine from L-ornithine: step 1/1. With respect to regulation, inhibited by antizyme (AZ) OAZ1 in response to polyamine levels. AZ inhibits the assembly of the functional homodimer by binding to ODC monomers and targeting them for ubiquitin-independent proteolytic destruction by the 26S proteasome. Functionally, catalyzes the first and rate-limiting step of polyamine biosynthesis that converts ornithine into putrescine, which is the precursor for the polyamines, spermidine and spermine. Polyamines are essential for cell proliferation and are implicated in cellular processes, ranging from DNA replication to apoptosis. The protein is Ornithine decarboxylase (spe-1) of Neurospora crassa (strain ATCC 24698 / 74-OR23-1A / CBS 708.71 / DSM 1257 / FGSC 987).